Reading from the N-terminus, the 257-residue chain is Acetyl-coenzyme A carboxylase carboxyl transferase subunit beta 1 (257 aa).

Residues 1-257 form the CoA carboxyltransferase N-terminal domain; that stretch reads MNINDIFLKR…KMHVNTGGEA (257 aa).

Belongs to the AccD/PCCB family. As to quaternary structure, acetyl-CoA carboxylase is a heterohexamer composed of biotin carboxyl carrier protein (AccB), biotin carboxylase (AccC) and two subunits each of ACCase subunit alpha (AccA) and ACCase subunit beta (AccD).

Its subcellular location is the cytoplasm. It catalyses the reaction N(6)-carboxybiotinyl-L-lysyl-[protein] + acetyl-CoA = N(6)-biotinyl-L-lysyl-[protein] + malonyl-CoA. It functions in the pathway lipid metabolism; malonyl-CoA biosynthesis; malonyl-CoA from acetyl-CoA: step 1/1. Functionally, component of the acetyl coenzyme A carboxylase (ACC) complex. Biotin carboxylase (BC) catalyzes the carboxylation of biotin on its carrier protein (BCCP) and then the CO(2) group is transferred by the transcarboxylase to acetyl-CoA to form malonyl-CoA. The protein is Acetyl-coenzyme A carboxylase carboxyl transferase subunit beta 1 of Lachnospira eligens (strain ATCC 27750 / DSM 3376 / VPI C15-48 / C15-B4) (Eubacterium eligens).